The following is a 247-amino-acid chain: MTHRDDLFSAPIASLGDWTFDERVAEVFPDMIQRSVPGYSNIISMIGMLAGRFARPGTQIYDLGCALGAATLAMRRTISHGDCRIIAVDNSPAMIDRCRRHISAFHATTPTEIIEDDISTVPIENASLVVLNFTMQFLEPAQRQTLLNRIYAGLNTGGALVLSEKFSFQDQLIGGLLFDMHHDFKRANGYSELEISQKRSMLENVMLTDTVEVHKQRLVEAGFGHAELWFQCFNFGSLISIKPESGQ.

Residues Y39, 89-90 (DN), 117-118 (DI), N132, and R199 each bind S-adenosyl-L-methionine.

Belongs to the class I-like SAM-binding methyltransferase superfamily. Cx-SAM synthase family. As to quaternary structure, homodimer.

The catalysed reaction is prephenate + S-adenosyl-L-methionine = carboxy-S-adenosyl-L-methionine + 3-phenylpyruvate + H2O. Catalyzes the conversion of S-adenosyl-L-methionine (SAM) to carboxy-S-adenosyl-L-methionine (Cx-SAM). This chain is Carboxy-S-adenosyl-L-methionine synthase, found in Sodalis glossinidius (strain morsitans).